The chain runs to 479 residues: Glutamyl-tRNA reductase (479 aa).

Residues 49-52, Ser-109, 114-116, and Gln-120 contribute to the substrate site; these read TCNR and EQQ. Cys-50 functions as the Nucleophile in the catalytic mechanism. 191 to 196 lines the NADP(+) pocket; it reads GAGSMG.

This sequence belongs to the glutamyl-tRNA reductase family. Homodimer.

It carries out the reaction (S)-4-amino-5-oxopentanoate + tRNA(Glu) + NADP(+) = L-glutamyl-tRNA(Glu) + NADPH + H(+). The protein operates within porphyrin-containing compound metabolism; protoporphyrin-IX biosynthesis; 5-aminolevulinate from L-glutamyl-tRNA(Glu): step 1/2. Its function is as follows. Catalyzes the NADPH-dependent reduction of glutamyl-tRNA(Glu) to glutamate 1-semialdehyde (GSA). This chain is Glutamyl-tRNA reductase, found in Rhodococcus jostii (strain RHA1).